The chain runs to 225 residues: PKHD-type hydroxylase YbiX (225 aa).

Positions 78–177 constitute a Fe2OG dioxygenase domain; sequence TLSTPLFNRY…RVASFMWIQS (100 aa). The Fe cation site is built by histidine 96, aspartate 98, and histidine 158. Residue arginine 168 participates in 2-oxoglutarate binding.

Fe(2+) serves as cofactor. The cofactor is L-ascorbate.

The chain is PKHD-type hydroxylase YbiX from Shigella flexneri serotype 5b (strain 8401).